Reading from the N-terminus, the 586-residue chain is Arginine--tRNA ligase (586 aa).

A 'HIGH' region motif is present at residues 133-143 (ANPTGPLNIVS).

This sequence belongs to the class-I aminoacyl-tRNA synthetase family. As to quaternary structure, monomer.

It is found in the cytoplasm. It carries out the reaction tRNA(Arg) + L-arginine + ATP = L-arginyl-tRNA(Arg) + AMP + diphosphate. The polypeptide is Arginine--tRNA ligase (Leptospira interrogans serogroup Icterohaemorrhagiae serovar Lai (strain 56601)).